Reading from the N-terminus, the 206-residue chain is Protein-methionine-sulfoxide reductase heme-binding subunit MsrQ (206 aa).

The next 4 membrane-spanning stretches (helical) occupy residues 8–28 (IVWL…WLVW), 82–102 (LWCF…ELGI), 116–136 (PYLT…LTST), and 153–173 (FVYL…KILS).

Belongs to the MsrQ family. In terms of assembly, heterodimer of a catalytic subunit (MsrP) and a heme-binding subunit (MsrQ). It depends on FMN as a cofactor. Heme b is required as a cofactor.

The protein resides in the cell inner membrane. Its function is as follows. Part of the MsrPQ system that repairs oxidized periplasmic proteins containing methionine sulfoxide residues (Met-O), using respiratory chain electrons. Thus protects these proteins from oxidative-stress damage caused by reactive species of oxygen and chlorine generated by the host defense mechanisms. MsrPQ is essential for the maintenance of envelope integrity under bleach stress, rescuing a wide series of structurally unrelated periplasmic proteins from methionine oxidation. MsrQ provides electrons for reduction to the reductase catalytic subunit MsrP, using the quinone pool of the respiratory chain. The protein is Protein-methionine-sulfoxide reductase heme-binding subunit MsrQ of Citrobacter koseri (strain ATCC BAA-895 / CDC 4225-83 / SGSC4696).